The sequence spans 338 residues: tRNA N6-adenosine threonylcarbamoyltransferase (338 aa).

2 residues coordinate Fe cation: H111 and H115. Residues 134–138 (LVSGG), D167, G180, and N272 each bind substrate. Residue D300 participates in Fe cation binding.

Belongs to the KAE1 / TsaD family. The cofactor is Fe(2+).

The protein localises to the cytoplasm. It carries out the reaction L-threonylcarbamoyladenylate + adenosine(37) in tRNA = N(6)-L-threonylcarbamoyladenosine(37) in tRNA + AMP + H(+). Functionally, required for the formation of a threonylcarbamoyl group on adenosine at position 37 (t(6)A37) in tRNAs that read codons beginning with adenine. Is involved in the transfer of the threonylcarbamoyl moiety of threonylcarbamoyl-AMP (TC-AMP) to the N6 group of A37, together with TsaE and TsaB. TsaD likely plays a direct catalytic role in this reaction. This is tRNA N6-adenosine threonylcarbamoyltransferase from Shewanella sp. (strain ANA-3).